Consider the following 464-residue polypeptide: Soluble pyridine nucleotide transhydrogenase (464 aa).

Aspartate 35–cysteine 44 is a binding site for FAD.

It belongs to the class-I pyridine nucleotide-disulfide oxidoreductase family. FAD is required as a cofactor.

The protein localises to the cytoplasm. It carries out the reaction NAD(+) + NADPH = NADH + NADP(+). Its function is as follows. Conversion of NADPH, generated by peripheral catabolic pathways, to NADH, which can enter the respiratory chain for energy generation. The polypeptide is Soluble pyridine nucleotide transhydrogenase (Pseudomonas syringae pv. tomato (strain ATCC BAA-871 / DC3000)).